The sequence spans 428 residues: Histidine--tRNA ligase (428 aa).

Belongs to the class-II aminoacyl-tRNA synthetase family.

Its subcellular location is the cytoplasm. The catalysed reaction is tRNA(His) + L-histidine + ATP = L-histidyl-tRNA(His) + AMP + diphosphate + H(+). The polypeptide is Histidine--tRNA ligase (Sulfolobus acidocaldarius (strain ATCC 33909 / DSM 639 / JCM 8929 / NBRC 15157 / NCIMB 11770)).